The following is a 636-amino-acid chain: Probable Xaa-Pro aminopeptidase P (636 aa).

Residues aspartate 414, aspartate 425, glutamate 523, and glutamate 537 each contribute to the Mn(2+) site.

This sequence belongs to the peptidase M24B family. It depends on Mn(2+) as a cofactor.

It carries out the reaction Release of any N-terminal amino acid, including proline, that is linked to proline, even from a dipeptide or tripeptide.. Catalyzes the removal of a penultimate prolyl residue from the N-termini of peptides. The chain is Probable Xaa-Pro aminopeptidase P (AMPP) from Ajellomyces capsulatus (strain H143) (Darling's disease fungus).